We begin with the raw amino-acid sequence, 110 residues long: UPF0060 membrane protein ASA_2267 (110 aa).

4 consecutive transmembrane segments (helical) span residues 7–27 (IGLF…PYLW), 33–53 (SVWL…LLSL), 63–83 (AAYG…VDGI), and 87–107 (LWDL…MFAP).

The protein belongs to the UPF0060 family.

The protein localises to the cell inner membrane. The protein is UPF0060 membrane protein ASA_2267 of Aeromonas salmonicida (strain A449).